A 207-amino-acid polypeptide reads, in one-letter code: Large ribosomal subunit protein uL4 (207 aa).

The tract at residues 56-76 (EVRGGGRKPWRQKGTGRARAG) is disordered. The span at 60-71 (GGRKPWRQKGTG) shows a compositional bias: basic residues.

Belongs to the universal ribosomal protein uL4 family. Part of the 50S ribosomal subunit.

In terms of biological role, one of the primary rRNA binding proteins, this protein initially binds near the 5'-end of the 23S rRNA. It is important during the early stages of 50S assembly. It makes multiple contacts with different domains of the 23S rRNA in the assembled 50S subunit and ribosome. Forms part of the polypeptide exit tunnel. This Desulfitobacterium hafniense (strain DSM 10664 / DCB-2) protein is Large ribosomal subunit protein uL4.